A 118-amino-acid polypeptide reads, in one-letter code: Holin-like protein CidA 2 (118 aa).

Helical transmembrane passes span 4–26 (VTLL…IQGV), 33–52 (GSLI…VLPL), 62–84 (LIVF…GSFL), and 91–113 (IFLL…SQLL).

It belongs to the CidA/LrgA family. CidA subfamily.

The protein localises to the cell membrane. Increases the activity of extracellular murein hydrolases possibly by mediating their export via hole formation. Inhibited by the antiholin-like proteins LrgAB. In an unstressed cell, the LrgAB products probably inhibit the function of the CidA protein. When a cell is stressed by the addition of antibiotics or by other factors in the environment, CidA possibly oligomerizes within the bacterial cell membrane, creating lesions that disrupt the proton motive force, which in turn results in loss of cell viability. These lesions are also hypothesized to regulate the subsequent cell lysis by either allowing the murein hydrolases access to the cell wall substrate and/or regulating their activity by a possible change in the cell wall pH that results from loss of membrane potential. The polypeptide is Holin-like protein CidA 2 (cidA2) (Bacillus cereus (strain ATCC 14579 / DSM 31 / CCUG 7414 / JCM 2152 / NBRC 15305 / NCIMB 9373 / NCTC 2599 / NRRL B-3711)).